A 1761-amino-acid chain; its full sequence is Laminin subunit beta-4 (1761 aa).

A signal peptide spans M1–A19. In terms of domain architecture, Laminin N-terminal spans N24–S264. Residues N169, N229, and N246 are each glycosylated (N-linked (GlcNAc...) asparagine). 19 cysteine pairs are disulfide-bonded: C265-C274, C267-C295, C297-C306, C309-C329, C332-C341, C334-C359, C362-C371, C374-C392, C395-C408, C397-C423, C425-C434, C437-C452, C455-C468, C457-C475, C477-C486, C489-C503, C506-C518, C508-C525, and C527-C536. Laminin EGF-like domains are found at residues C265 to S331, C332 to P394, C395 to P454, and C455 to P505. The Laminin EGF-like 5; truncated domain occupies C506–L552. Residues F545–H763 form the Laminin IV type B domain. Disulfide bonds link C769–C781, C771–C788, C790–C799, C802–C814, C817–C829, C819–C836, C838–C847, C850–C860, C863–C872, C865–C879, C882–C891, C894–C908, C913–C938, C940–C949, C952–C967, C970–C984, C972–C991, C994–C1003, C1006–C1019, C1022–C1043, C1024–C1050, C1052–C1061, C1064–C1077, C1080–C1092, C1082–C1099, C1101–C1110, C1113–C1125, C1128–C1140, C1130–C1147, C1149–C1158, and C1161–C1172. Laminin EGF-like domains lie at C769 to P816, C817 to P862, C863 to P910, C911 to P969, C970 to R1021, C1022 to S1079, C1080 to P1127, and C1128 to Q1174. N1016 carries an N-linked (GlcNAc...) asparagine glycan. Residue N1055 is glycosylated (N-linked (GlcNAc...) asparagine). The tract at residues C1175–V1375 is domain II. Residues N1223, N1301, N1326, N1333, and N1354 are each glycosylated (N-linked (GlcNAc...) asparagine). A coiled-coil region spans residues K1243–N1301. Residues C1376–C1408 are domain alpha. Residues H1409–S1761 are domain I. Residues T1416–L1480 are a coiled coil. N-linked (GlcNAc...) asparagine glycosylation is found at N1469, N1517, N1587, N1596, N1609, and N1725. Positions I1525–C1759 form a coiled coil.

In terms of assembly, laminin is a complex glycoprotein, consisting of three different polypeptide chains (alpha, beta, gamma), which are bound to each other by disulfide bonds into a cross-shaped molecule comprising one long and three short arms with globules at each end.

Its subcellular location is the secreted. It localises to the extracellular space. It is found in the extracellular matrix. The protein localises to the basement membrane. In terms of biological role, binding to cells via a high affinity receptor, laminin is thought to mediate the attachment, migration and organization of cells into tissues during embryonic development by interacting with other extracellular matrix components. The polypeptide is Laminin subunit beta-4 (LAMB4) (Homo sapiens (Human)).